Consider the following 307-residue polypeptide: Aspartate carbamoyltransferase catalytic subunit (307 aa).

Carbamoyl phosphate is bound by residues arginine 54 and threonine 55. Position 83 (lysine 83) interacts with L-aspartate. Positions 104, 132, and 135 each coordinate carbamoyl phosphate. L-aspartate contacts are provided by arginine 165 and arginine 228. Residues leucine 267 and proline 268 each contribute to the carbamoyl phosphate site.

Belongs to the aspartate/ornithine carbamoyltransferase superfamily. ATCase family. In terms of assembly, heterododecamer (2C3:3R2) of six catalytic PyrB chains organized as two trimers (C3), and six regulatory PyrI chains organized as three dimers (R2).

The enzyme catalyses carbamoyl phosphate + L-aspartate = N-carbamoyl-L-aspartate + phosphate + H(+). The protein operates within pyrimidine metabolism; UMP biosynthesis via de novo pathway; (S)-dihydroorotate from bicarbonate: step 2/3. Its function is as follows. Catalyzes the condensation of carbamoyl phosphate and aspartate to form carbamoyl aspartate and inorganic phosphate, the committed step in the de novo pyrimidine nucleotide biosynthesis pathway. The protein is Aspartate carbamoyltransferase catalytic subunit of Clostridium botulinum (strain Okra / Type B1).